A 122-amino-acid chain; its full sequence is Large ribosomal subunit protein uL14 (122 aa).

Belongs to the universal ribosomal protein uL14 family. Part of the 50S ribosomal subunit. Forms a cluster with proteins L3 and L19. In the 70S ribosome, L14 and L19 interact and together make contacts with the 16S rRNA in bridges B5 and B8.

Its function is as follows. Binds to 23S rRNA. Forms part of two intersubunit bridges in the 70S ribosome. The sequence is that of Large ribosomal subunit protein uL14 from Chlorobium luteolum (strain DSM 273 / BCRC 81028 / 2530) (Pelodictyon luteolum).